The following is a 266-amino-acid chain: Dihydropteroate synthase (266 aa).

Residues 12-260 form the Pterin-binding domain; the sequence is AAIMGILNVT…DVKANQEIVA (249 aa). Asn19 is a binding site for Mg(2+). Residues Thr59, Asp93, Asn112, Asp176, Lys212, and 248–250 contribute to the (7,8-dihydropterin-6-yl)methyl diphosphate site; that span reads RVH.

The protein belongs to the DHPS family. In terms of assembly, homodimer or homotrimer. Mg(2+) is required as a cofactor.

It carries out the reaction (7,8-dihydropterin-6-yl)methyl diphosphate + 4-aminobenzoate = 7,8-dihydropteroate + diphosphate. It functions in the pathway cofactor biosynthesis; tetrahydrofolate biosynthesis; 7,8-dihydrofolate from 2-amino-4-hydroxy-6-hydroxymethyl-7,8-dihydropteridine diphosphate and 4-aminobenzoate: step 1/2. Functionally, catalyzes the condensation of para-aminobenzoate (pABA) with 6-hydroxymethyl-7,8-dihydropterin diphosphate (DHPt-PP) to form 7,8-dihydropteroate (H2Pte), the immediate precursor of folate derivatives. This chain is Dihydropteroate synthase (folP), found in Streptococcus pyogenes.